The sequence spans 409 residues: MHAWPASEVPALPGKGRDLRIHDTATGGRITLDPGPVARIYVCGITPYDATHMGHAATYNAFDLVQRVWLDTKRQVHYVQNVTDVDDPLLERAVRDGQDWTELAERETALFREDMTALRMLPPRHYIGAVEAIPGIVPLVERLRDAGAAYDLDGDIYFSVDTDPHFGEVSGLDAEAMRLLSAERGGDPERPGKKNPLDPMLWMAARPGEPSWDGASLGEGRPGWHIECVAIALDHLGMGFDIQGGGSDLAFPHHEMGASHAQALTGEHPFAKAYVHAGMVGLDGEKMSKSRGNLVFVSTLRREGVDPAALRLALLSRHYRSDWEWTDQVLAEAVERLARWRAAVSRPDGPSAEALVEEVREALADDLDSPAALAAVDRWAALQSAEGGTDEGAPGVVSRTVDALLGVAL.

Cysteine 43 is a binding site for Zn(2+). Residues 43 to 46, threonine 58, and 81 to 83 contribute to the L-cysteinyl-5'-AMP site; these read CGIT and NVT. Residues 45–55 carry the 'HIGH' region motif; the sequence is ITPYDATHMGH. The short motif at 183–188 is the 'ERGGDP' region element; the sequence is ERGGDP. Tryptophan 224 contributes to the L-cysteinyl-5'-AMP binding site. Residue cysteine 228 coordinates Zn(2+). Position 246–248 (246–248) interacts with L-cysteinyl-5'-AMP; the sequence is GSD. Histidine 253 provides a ligand contact to Zn(2+). L-cysteinyl-5'-AMP is bound at residue valine 280. The 'KMSKS' region signature appears at 286-290; the sequence is KMSKS.

This sequence belongs to the class-I aminoacyl-tRNA synthetase family. MshC subfamily. In terms of assembly, monomer. It depends on Zn(2+) as a cofactor.

The enzyme catalyses 1D-myo-inositol 2-amino-2-deoxy-alpha-D-glucopyranoside + L-cysteine + ATP = 1D-myo-inositol 2-(L-cysteinylamino)-2-deoxy-alpha-D-glucopyranoside + AMP + diphosphate + H(+). Functionally, catalyzes the ATP-dependent condensation of GlcN-Ins and L-cysteine to form L-Cys-GlcN-Ins. In Streptomyces griseus subsp. griseus (strain JCM 4626 / CBS 651.72 / NBRC 13350 / KCC S-0626 / ISP 5235), this protein is L-cysteine:1D-myo-inositol 2-amino-2-deoxy-alpha-D-glucopyranoside ligase.